Consider the following 1043-residue polypeptide: P3N-PIPO polyprotein (1043 aa).

One can recognise a Peptidase S30 domain in the interval 219 to 362 (KMNDQGVDML…RTMSHKIVHF (144 aa)). Catalysis depends on for P1 proteinase activity residues histidine 270, aspartate 279, and serine 313. The Involved in interaction with stylet and aphid transmission motif lies at 414–417 (KITC). The Involved in virions binding and aphid transmission motif lies at 672 to 674 (PTK). The region spanning 698-820 (MYIAKEGYCY…ESSLKHYRVG (123 aa)) is the Peptidase C6 domain. Active-site for helper component proteinase activity residues include cysteine 706 and histidine 779.

It belongs to the potyviridae P3N-PIPO polyprotein family. Interacts (via PIPO domain) with host PCaP1 protein; this interaction may help to anchor the movement complex to the plasma membrane from which the complex could move to the plasmodesmata. In terms of processing, potyviral RNA is expressed as two polyproteins which undergo post-translational proteolytic processing. Genome polyprotein is processed by NIa-pro, P1 and HC-pro proteinases resulting in the production of at least ten individual proteins. P3N-PIPO is cleaved by P1 and HC-pro proteinases resulting in the production of three individual proteins. The P1 proteinase and the HC-pro cleave only their respective C-termini autocatalytically.

It is found in the host cell junction. It localises to the host plasmodesma. It carries out the reaction Hydrolyzes a Gly-|-Gly bond at its own C-terminus, commonly in the sequence -Tyr-Xaa-Val-Gly-|-Gly, in the processing of the potyviral polyprotein.. Functionally, cysteine protease that cleaves a Gly-Gly dipeptide at its own C-terminus. Required for aphid transmission and also has proteolytic activity. Interacts with virions and aphid stylets. Acts as a suppressor of RNA-mediated gene silencing, also known as post-transcriptional gene silencing (PTGS), a mechanism of plant viral defense that limits the accumulation of viral RNAs. May have RNA-binding activity. Allows efficient cell to cell propagation, by bypassing the host cell wall barrier. Transports viral genome to neighboring plant cells directly through plasmosdesmata, without any budding. The protein is P3N-PIPO polyprotein of Alliaria petiolata (Garlic mustard).